The chain runs to 109 residues: Large ribosomal subunit protein eL30 (109 aa).

It belongs to the eukaryotic ribosomal protein eL30 family. In terms of assembly, component of the large ribosomal subunit (LSU). Mature N.crassa ribosomes consist of a small (40S) and a large (60S) subunit. The 40S small subunit contains 1 molecule of ribosomal RNA (18S rRNA) and at least 32 different proteins. The large 60S subunit contains 3 rRNA molecules (26S, 5.8S and 5S rRNA) and at least 42 different proteins.

It is found in the cytoplasm. Functionally, component of the ribosome, a large ribonucleoprotein complex responsible for the synthesis of proteins in the cell. The small ribosomal subunit (SSU) binds messenger RNAs (mRNAs) and translates the encoded message by selecting cognate aminoacyl-transfer RNA (tRNA) molecules. The large subunit (LSU) contains the ribosomal catalytic site termed the peptidyl transferase center (PTC), which catalyzes the formation of peptide bonds, thereby polymerizing the amino acids delivered by tRNAs into a polypeptide chain. The nascent polypeptides leave the ribosome through a tunnel in the LSU and interact with protein factors that function in enzymatic processing, targeting, and the membrane insertion of nascent chains at the exit of the ribosomal tunnel. The chain is Large ribosomal subunit protein eL30 (rpl-30) from Neurospora crassa (strain ATCC 24698 / 74-OR23-1A / CBS 708.71 / DSM 1257 / FGSC 987).